Reading from the N-terminus, the 505-residue chain is Glutamate--tRNA ligase (505 aa).

Positions 11 to 21 (PSPTGPLHIGG) match the 'HIGH' region motif. The 'KMSKS' region signature appears at 260 to 264 (KLSKR). Lysine 263 is a binding site for ATP.

It belongs to the class-I aminoacyl-tRNA synthetase family. Glutamate--tRNA ligase type 1 subfamily. Monomer.

The protein resides in the cytoplasm. It catalyses the reaction tRNA(Glu) + L-glutamate + ATP = L-glutamyl-tRNA(Glu) + AMP + diphosphate. Functionally, catalyzes the attachment of glutamate to tRNA(Glu) in a two-step reaction: glutamate is first activated by ATP to form Glu-AMP and then transferred to the acceptor end of tRNA(Glu). The protein is Glutamate--tRNA ligase of Christiangramia forsetii (strain DSM 17595 / CGMCC 1.15422 / KT0803) (Gramella forsetii).